We begin with the raw amino-acid sequence, 716 residues long: MMQQLLALVGALATLILTQHAEGTAPASPSPVEISVLRDCIAEAKLLVDTAYNHTQKSIMQRLRSGSASPMDLLAYFKQPVAATRRVVQAADYMHVALGLLEERLQPRGSRPFNATDVLTEPQLRLLSQASGCALQDQAERCSNKYRTITGRCNNKKHPWLGASNQALARWLPAEYEDHRSLPFGWTPGKRRNGFLLPLVRDVSNQIVRFPSKKLTSDRGRALMFMQWGQFIDHDLDFSPESPARVAFSMGVDCEKTCAQLPPCFPIKIPRNDPRIKNQRDCIPFFRSAPACPQNRNKVRNQINALTSFVDASMVYGSEVTLALRLRNRTNFLGLLATNQRFQDNGRALLPFDNLHEDPCLLTNRSARIPCFLAGDTRSSETPKLTALHTLFVREHNRLAAELRRLNPHWSGDKLYNEARKIVGAMVQIITYRDFLPLVLGRARIRRTLGPYRGYCSNVDPRVANVFTLAFRFGHTMLQPFMFRLDSQYRASAPNSHVPLSSVFFASWRIIHEGGIDPILRGLMATPAKLNRQDSMLVDELRDKLFQQVRRIGLDLAALNMQRSRDHGLPGYNAWRRFCGLSQPRNLAQLSRVLKNQDLARKFLRLYKTPDNIDIWVGAIAEPLLPGARVGPLLACLFENQFRRARDGDRFWWQKWGVFTKRQRKALRRISLSRIVCDNTGITTVSRDIFRANIYPQGFVSCSRIPKLNLSAWRGK.

Residues methionine 1 to threonine 18 form the signal peptide. The propeptide occupies glutamine 19–glutamate 140. N-linked (GlcNAc...) asparagine glycans are attached at residues asparagine 53 and asparagine 114. A disulfide bond links cysteine 142 and cysteine 153. Aspartate 233 lines the heme b pocket. Histidine 234 (proton acceptor) is an active-site residue. Aspartate 235 lines the Ca(2+) pocket. 2 disulfide bridges follow: cysteine 254/cysteine 264 and cysteine 258/cysteine 282. 4 residues coordinate Ca(2+): threonine 307, phenylalanine 309, aspartate 311, and serine 313. N-linked (GlcNAc...) asparagine glycans are attached at residues asparagine 328 and asparagine 364. Cysteines 360 and 371 form a disulfide. Residues glutamate 381 and histidine 475 each contribute to the heme b site. The residue at position 489 (tyrosine 489) is a 3'-nitrotyrosine. 2 cysteine pairs are disulfide-bonded: cysteine 579-cysteine 636 and cysteine 677-cysteine 702. Asparagine 709 is a glycosylation site (N-linked (GlcNAc...) asparagine).

It belongs to the peroxidase family. XPO subfamily. Tetramer of two light chains and two heavy chains. Requires Ca(2+) as cofactor. The cofactor is heme b.

Its subcellular location is the cytoplasmic granule. The catalysed reaction is 2 a phenolic donor + H2O2 = 2 a phenolic radical donor + 2 H2O. In terms of biological role, mediates tyrosine nitration of secondary granule proteins in mature resting eosinophils. This chain is Eosinophil peroxidase (Epx), found in Mus musculus (Mouse).